The primary structure comprises 174 residues: Adenine phosphoribosyltransferase (174 aa).

This sequence belongs to the purine/pyrimidine phosphoribosyltransferase family. In terms of assembly, homodimer.

Its subcellular location is the cytoplasm. It catalyses the reaction AMP + diphosphate = 5-phospho-alpha-D-ribose 1-diphosphate + adenine. Its pathway is purine metabolism; AMP biosynthesis via salvage pathway; AMP from adenine: step 1/1. Catalyzes a salvage reaction resulting in the formation of AMP, that is energically less costly than de novo synthesis. The sequence is that of Adenine phosphoribosyltransferase from Nitrosomonas europaea (strain ATCC 19718 / CIP 103999 / KCTC 2705 / NBRC 14298).